The chain runs to 185 residues: Elongation factor P (185 aa).

This sequence belongs to the elongation factor P family.

It localises to the cytoplasm. The protein operates within protein biosynthesis; polypeptide chain elongation. Functionally, involved in peptide bond synthesis. Stimulates efficient translation and peptide-bond synthesis on native or reconstituted 70S ribosomes in vitro. Probably functions indirectly by altering the affinity of the ribosome for aminoacyl-tRNA, thus increasing their reactivity as acceptors for peptidyl transferase. The polypeptide is Elongation factor P (Acaryochloris marina (strain MBIC 11017)).